A 251-amino-acid chain; its full sequence is Imidazole glycerol phosphate synthase subunit HisF (251 aa).

Residues Asp11 and Asp130 contribute to the active site.

The protein belongs to the HisA/HisF family. Heterodimer of HisH and HisF.

Its subcellular location is the cytoplasm. It carries out the reaction 5-[(5-phospho-1-deoxy-D-ribulos-1-ylimino)methylamino]-1-(5-phospho-beta-D-ribosyl)imidazole-4-carboxamide + L-glutamine = D-erythro-1-(imidazol-4-yl)glycerol 3-phosphate + 5-amino-1-(5-phospho-beta-D-ribosyl)imidazole-4-carboxamide + L-glutamate + H(+). It functions in the pathway amino-acid biosynthesis; L-histidine biosynthesis; L-histidine from 5-phospho-alpha-D-ribose 1-diphosphate: step 5/9. Its function is as follows. IGPS catalyzes the conversion of PRFAR and glutamine to IGP, AICAR and glutamate. The HisF subunit catalyzes the cyclization activity that produces IGP and AICAR from PRFAR using the ammonia provided by the HisH subunit. The protein is Imidazole glycerol phosphate synthase subunit HisF of Parabacteroides distasonis (strain ATCC 8503 / DSM 20701 / CIP 104284 / JCM 5825 / NCTC 11152).